A 102-amino-acid chain; its full sequence is Bowman-Birk type wound-induced proteinase inhibitor WIP1 (102 aa).

Positions 1-15 (MKSSPHLVLILCLQA) are cleaved as a signal peptide. Cystine bridges form between cysteine 46–cysteine 102, cysteine 47–cysteine 60, cysteine 50–cysteine 98, cysteine 67–cysteine 74, and cysteine 71–cysteine 90.

This sequence belongs to the Bowman-Birk serine protease inhibitor family.

This chain is Bowman-Birk type wound-induced proteinase inhibitor WIP1 (WIP1), found in Zea mays (Maize).